The chain runs to 188 residues: Putative adenylate kinase (188 aa).

5 residues coordinate ATP: Gly10, Gly12, Lys13, Ser14, and Thr15. The NMP stretch occupies residues 30–53; that stretch reads HVSSFLIQNKAFSEYDELRQSYVI. The LID stretch occupies residues 103-113; sequence RRGWGELKIAE. ATP contacts are provided by Arg104 and Lys142.

This sequence belongs to the adenylate kinase family. AK6 subfamily. In terms of assembly, interacts with uS11. Not a structural component of 40S pre-ribosomes, but transiently interacts with them by binding to uS11.

It catalyses the reaction AMP + ATP = 2 ADP. The catalysed reaction is ATP + H2O = ADP + phosphate + H(+). Its function is as follows. Broad-specificity nucleoside monophosphate (NMP) kinase that catalyzes the reversible transfer of the terminal phosphate group between nucleoside triphosphates and monophosphates. Also has ATPase activity. Involved in the late maturation steps of the 30S ribosomal particles, specifically 16S rRNA maturation. While NMP activity is not required for ribosome maturation, ATPase activity is. Associates transiently with small ribosomal subunit protein uS11. ATP hydrolysis breaks the interaction with uS11. May temporarily remove uS11 from the ribosome to enable a conformational change of the ribosomal RNA that is needed for the final maturation step of the small ribosomal subunit. The chain is Putative adenylate kinase from Sulfurisphaera tokodaii (strain DSM 16993 / JCM 10545 / NBRC 100140 / 7) (Sulfolobus tokodaii).